Consider the following 469-residue polypeptide: Ribulose bisphosphate carboxylase large chain (469 aa).

N6,N6,N6-trimethyllysine is present on Lys-5. 2 residues coordinate substrate: Asn-114 and Thr-164. Lys-166 functions as the Proton acceptor in the catalytic mechanism. Position 168 (Lys-168) interacts with substrate. Mg(2+) is bound by residues Lys-192, Asp-194, and Glu-195. An N6-carboxylysine modification is found at Lys-192. Catalysis depends on His-285, which acts as the Proton acceptor. The substrate site is built by Arg-286, His-318, and Ser-370.

This sequence belongs to the RuBisCO large chain family. Type I subfamily. In terms of assembly, heterohexadecamer of 8 large chains and 8 small chains; disulfide-linked. The disulfide link is formed within the large subunit homodimers. Mg(2+) is required as a cofactor. In terms of processing, the disulfide bond which can form in the large chain dimeric partners within the hexadecamer appears to be associated with oxidative stress and protein turnover.

The protein resides in the plastid. The protein localises to the chloroplast. It catalyses the reaction 2 (2R)-3-phosphoglycerate + 2 H(+) = D-ribulose 1,5-bisphosphate + CO2 + H2O. The enzyme catalyses D-ribulose 1,5-bisphosphate + O2 = 2-phosphoglycolate + (2R)-3-phosphoglycerate + 2 H(+). Functionally, ruBisCO catalyzes two reactions: the carboxylation of D-ribulose 1,5-bisphosphate, the primary event in carbon dioxide fixation, as well as the oxidative fragmentation of the pentose substrate in the photorespiration process. Both reactions occur simultaneously and in competition at the same active site. This is Ribulose bisphosphate carboxylase large chain from Cephalanthus occidentalis (Common buttonbush).